The chain runs to 653 residues: Chaperone protein DnaK (653 aa).

A Phosphothreonine; by autocatalysis modification is found at T200. The disordered stretch occupies residues 615–653 (AEAAAAGAAGAGGAGASAGGASQQQDDVVDAEFKEVKKD). Gly residues predominate over residues 623-632 (AGAGGAGASA).

Belongs to the heat shock protein 70 family.

Acts as a chaperone. This is Chaperone protein DnaK from Paraburkholderia xenovorans (strain LB400).